We begin with the raw amino-acid sequence, 225 residues long: Urease accessory protein UreG (225 aa).

A GTP-binding site is contributed by 25–32 (GPVGAGKT).

The protein belongs to the SIMIBI class G3E GTPase family. UreG subfamily. Homodimer. UreD, UreF and UreG form a complex that acts as a GTP-hydrolysis-dependent molecular chaperone, activating the urease apoprotein by helping to assemble the nickel containing metallocenter of UreC. The UreE protein probably delivers the nickel.

The protein resides in the cytoplasm. Facilitates the functional incorporation of the urease nickel metallocenter. This process requires GTP hydrolysis, probably effectuated by UreG. The chain is Urease accessory protein UreG from Haemophilus influenzae (strain 86-028NP).